The following is a 378-amino-acid chain: Chitinase (378 aa).

Positions M1–G28 are cleaved as a signal peptide. A GH18 domain is found at G53 to H378. The active-site Proton donor is the E174. C220 and C230 are disulfide-bonded.

The protein belongs to the glycosyl hydrolase 18 family. As to quaternary structure, forms a hetero-multimeric, high molecular weight complex composed of at least CHT1, SOAP AND WARP. Within the complex, may interact with WARP via a disulfide bond.

The protein localises to the secreted. The protein resides in the cytoplasmic vesicle. Its subcellular location is the secretory vesicle. It is found in the microneme. It catalyses the reaction Random endo-hydrolysis of N-acetyl-beta-D-glucosaminide (1-&gt;4)-beta-linkages in chitin and chitodextrins.. With respect to regulation, inhibited by allosamidin. Endochitinase that cleaves beta-1,4-linkages between tri- and tetramers of N-acetylglucosamine (GlcNAc) from penta- and hexameric chitin oligomers. Does not cleave smaller chitin oligosaccharides. Required to cross the acellular, chitin-containing peritrophic matrix (PM) which is formed around the ingested blood meal in the mosquito midgut allowing the ookinete to invade the mosquito gut epithelium. The protein is Chitinase of Plasmodium falciparum (isolate 3D7).